Here is a 335-residue protein sequence, read N- to C-terminus: Dehydration-responsive element-binding protein 2A (335 aa).

2 disordered regions span residues 1 to 32 (MAVY…GTTV) and 50 to 74 (STKK…GPEN). Residues 19 to 55 (RKRKSRSRGDGTTVAERLKRWKEYNETVEEVSTKKRK) carry the Nuclear localization signal motif. A compositionally biased stretch (basic residues) spans 52-66 (KKRKVPAKGSKKGCM). Positions 78-135 (SFRGVRQRIWGKWVAEIREPNRGSRLWLGTFPTAQEAASAYDEAAKAMYGPLARLNFP) form a DNA-binding region, AP2/ERF. A disordered region spans residues 279–304 (QDRYPGNSVANGSYRPESQQSGFDPL). The segment covering 286–304 (SVANGSYRPESQQSGFDPL) has biased composition (polar residues).

It belongs to the AP2/ERF transcription factor family. ERF subfamily. In terms of assembly, interacts with MED25. Binds to DPB3-1 in the nucleus during heat-stress. Ubiquitinated by DRIP1 and DRIP2. Ubiquitination probably leads to its subsequent degradation, thus negatively regulating response to drought. As to expression, expressed preferentially in roots and stems, and at a lower level in leaves.

It is found in the nucleus. In terms of biological role, transcriptional activator that binds specifically to the DNA sequence 5'-[AG]CCGAC-3'. Binding to the C-repeat/DRE element mediates high salinity- and dehydration-inducible transcription. Promotes the expression of heat stress-inducible genes by contributing to the formation of a heat stress-specific transcriptional complex with NF-Y subunits (e.g. DPB3-1, NF-YA2 and NF-YB3) at the promoter of target genes, thus promoting heat tolerance. The protein is Dehydration-responsive element-binding protein 2A of Arabidopsis thaliana (Mouse-ear cress).